The following is a 174-amino-acid chain: Ribosome maturation factor RimM (174 aa).

One can recognise a PRC barrel domain in the interval 98–171 (EGEFYFHEII…KIEIELMEGL (74 aa)).

The protein belongs to the RimM family. In terms of assembly, binds ribosomal protein uS19.

The protein localises to the cytoplasm. An accessory protein needed during the final step in the assembly of 30S ribosomal subunit, possibly for assembly of the head region. Essential for efficient processing of 16S rRNA. May be needed both before and after RbfA during the maturation of 16S rRNA. It has affinity for free ribosomal 30S subunits but not for 70S ribosomes. The sequence is that of Ribosome maturation factor RimM from Bacillus subtilis (strain 168).